Consider the following 338-residue polypeptide: Glutaminase (338 aa).

Positions 80, 130, 174, 181, 205, 257, and 275 each coordinate substrate.

Belongs to the glutaminase family. In terms of assembly, homotetramer.

The catalysed reaction is L-glutamine + H2O = L-glutamate + NH4(+). This is Glutaminase from Microcystis aeruginosa (strain NIES-843 / IAM M-2473).